Consider the following 109-residue polypeptide: EPIDERMAL PATTERNING FACTOR-like protein 4 (109 aa).

Positions 1–26 (MGTFRRRRRFLLAALVTFALLHLFSA) are cleaved as a signal peptide. Cystine bridges form between Cys-66–Cys-100, Cys-70–Cys-76, and Cys-73–Cys-102.

Belongs to the plant cysteine rich small secretory peptide family. Epidermal patterning factor subfamily. As to quaternary structure, interacts with ERECTA. Expressed at the base of the apical meristem at 3 days after germination. Not detected in the hypocotyl. Expressed in developing stems soon after bolting, in inflorescence stems and in young siliques.

Its subcellular location is the secreted. Its function is as follows. Acts primarily as positive regulator of inflorescence growth. Endodermal expression is sufficient for proper inflorescence architecture. Redundantly involved with EPFL6 in procambial development regulation. Controls stomatal patterning. Mediates stomatal development inhibition. TMM (AC Q9SSD1) functions to dampen or block CLL2 signaling. Acts as a growth-regulatory ligand for ERECTA family receptors. This is EPIDERMAL PATTERNING FACTOR-like protein 4 from Arabidopsis thaliana (Mouse-ear cress).